The following is a 109-amino-acid chain: Anther-specific protein MZm3-3 (109 aa).

Residues 1-41 (MTATTTTAAGGGKVQPRGLPVALSLLLLLVLAAGLGGGAEA) form the signal peptide. 4 disulfide bridges follow: C45-C86, C55-C75, C76-C101, and C88-C108.

The protein belongs to the A9/FIL1 family. In terms of tissue distribution, tapetum of anthers.

It is found in the secreted. The chain is Anther-specific protein MZm3-3 from Zea mays (Maize).